The following is a 353-amino-acid chain: Photosystem II D2 protein (353 aa).

Threonine 2 carries the post-translational modification N-acetylthreonine. Threonine 2 is modified (phosphothreonine). A helical transmembrane segment spans residues 41–61; it reads CAYFALGGWFTGTTFVTSWYT. Histidine 118 contributes to the chlorophyll a binding site. The chain crosses the membrane as a helical span at residues 125–141; sequence GFMLRQFELARSVQLRP. 2 residues coordinate pheophytin a: glutamine 130 and asparagine 143. The helical transmembrane segment at 153 to 166 threads the bilayer; the sequence is VFVSVFLIYPLGQS. Histidine 198 is a binding site for chlorophyll a. The chain crosses the membrane as a helical span at residues 208–228; it reads AALLCAIHGATVENTLFEDGD. The a plastoquinone site is built by histidine 215 and phenylalanine 262. Histidine 215 lines the Fe cation pocket. Histidine 269 contacts Fe cation. Residues 279-295 form a helical membrane-spanning segment; it reads GLWMSAIGVVGLALNLR.

The protein belongs to the reaction center PufL/M/PsbA/D family. PSII is composed of 1 copy each of membrane proteins PsbA, PsbB, PsbC, PsbD, PsbE, PsbF, PsbH, PsbI, PsbJ, PsbK, PsbL, PsbM, PsbT, PsbX, PsbY, PsbZ, Psb30/Ycf12, at least 3 peripheral proteins of the oxygen-evolving complex and a large number of cofactors. It forms dimeric complexes. It depends on The D1/D2 heterodimer binds P680, chlorophylls that are the primary electron donor of PSII, and subsequent electron acceptors. It shares a non-heme iron and each subunit binds pheophytin, quinone, additional chlorophylls, carotenoids and lipids. There is also a Cl(-1) ion associated with D1 and D2, which is required for oxygen evolution. The PSII complex binds additional chlorophylls, carotenoids and specific lipids. as a cofactor.

The protein resides in the plastid. It localises to the chloroplast thylakoid membrane. It catalyses the reaction 2 a plastoquinone + 4 hnu + 2 H2O = 2 a plastoquinol + O2. Its function is as follows. Photosystem II (PSII) is a light-driven water:plastoquinone oxidoreductase that uses light energy to abstract electrons from H(2)O, generating O(2) and a proton gradient subsequently used for ATP formation. It consists of a core antenna complex that captures photons, and an electron transfer chain that converts photonic excitation into a charge separation. The D1/D2 (PsbA/PsbD) reaction center heterodimer binds P680, the primary electron donor of PSII as well as several subsequent electron acceptors. D2 is needed for assembly of a stable PSII complex. In Liriodendron tulipifera (Tuliptree), this protein is Photosystem II D2 protein.